Reading from the N-terminus, the 569-residue chain is MRVSQMLVPTLREVPAEAEVVSHQLLLRAGFIRKTASGVYTYLPLAQRVLKKLRQIIREEIDKQGGQELLMPIIQPAEMWLESGRWHVYGPELFRLKDRHDRNFCLGPTHEEVITILIRGEVRSYKQMPLLLYQIQNKYRDERRPRFGLLRGREFIMKDLYSFDRDEAGLDISYQKMHEAYTSIFSRCGVKFRPVEADSGAIGGSSTHEFMVLAESGEAAILYCSDCDYAANVEKATTLPAAGLDPAIQQLELQEVSTPGKKTAEEVAKFLGVEPFQVIKTMFYKTDKEVVAALVRGDRDVNEIKLLNVLGALTLDLADESTVQQVTGAPTGYVGPVGLENIRIVADMEVMALVNAVVGANKQDAHLINVNPKRDFQPEIVEDIRMVKAGEPCPKCGAQLLEARGIEVGQIFKLGTKYSKALGATFLDENGKEQPIVMGCYGIGVSRTMAAAIEQNYDKDGIIWPASIAPYQAIVIPVAPKDDNQMKIAEELYKALNQAGVETILDDRSERPGVKFKDADLIGYPLRIVVGNKAVTEGVVEIRQRRSGQTDLVSVKDSVPKILEILPTL.

The protein belongs to the class-II aminoacyl-tRNA synthetase family. ProS type 1 subfamily. As to quaternary structure, homodimer.

It localises to the cytoplasm. It catalyses the reaction tRNA(Pro) + L-proline + ATP = L-prolyl-tRNA(Pro) + AMP + diphosphate. Catalyzes the attachment of proline to tRNA(Pro) in a two-step reaction: proline is first activated by ATP to form Pro-AMP and then transferred to the acceptor end of tRNA(Pro). As ProRS can inadvertently accommodate and process non-cognate amino acids such as alanine and cysteine, to avoid such errors it has two additional distinct editing activities against alanine. One activity is designated as 'pretransfer' editing and involves the tRNA(Pro)-independent hydrolysis of activated Ala-AMP. The other activity is designated 'posttransfer' editing and involves deacylation of mischarged Ala-tRNA(Pro). The misacylated Cys-tRNA(Pro) is not edited by ProRS. The chain is Proline--tRNA ligase from Desulforamulus reducens (strain ATCC BAA-1160 / DSM 100696 / MI-1) (Desulfotomaculum reducens).